A 91-amino-acid polypeptide reads, in one-letter code: Non-specific lipid-transfer protein 1 (91 aa).

Cystine bridges form between Cys-4–Cys-51, Cys-14–Cys-28, Cys-29–Cys-74, and Cys-49–Cys-88.

As to expression, detected in seeds (at protein level).

Its function is as follows. Plant non-specific lipid-transfer proteins transfer phospholipids as well as galactolipids across membranes. May play a role in wax or cutin deposition in the cell walls of expanding epidermal cells and certain secretory tissues. The sequence is that of Non-specific lipid-transfer protein 1 from Trachyspermum ammi (Ajowan caraway).